The chain runs to 494 residues: Nicotianamine aminotransferase 1 (494 aa).

2 stretches are compositionally biased toward low complexity: residues 24-38 and 48-62; these read SGTS…TSSS and STAM…AASS. The disordered stretch occupies residues 24–76; that stretch reads SGTSYPTRTTTTSSSAPEFTNKKQSTAMAPTTAAAAASSNGGGESDGSSKEWR. Position 322 is an N6-(pyridoxal phosphate)lysine (Lys322).

The protein belongs to the class-I pyridoxal-phosphate-dependent aminotransferase family. It depends on pyridoxal 5'-phosphate as a cofactor. As to expression, expressed in companion and pericycle cells adjacent to the protoxylem of roots. Expressed in companion cells of shoots.

The enzyme catalyses nicotianamine + 2-oxoglutarate = 3''-deamino-3''-oxonicotianamine + L-glutamate. In terms of biological role, involved in biosynthesis of mugineic acid family phytosiderophores, which are ferric iron chelators produced in graminaceous plants in response to iron deficiency. The sequence is that of Nicotianamine aminotransferase 1 from Oryza sativa subsp. japonica (Rice).